Here is a 246-residue protein sequence, read N- to C-terminus: Glandular kallikrein (246 aa).

Positions 1 to 7 (APPIQSR) are excised as a propeptide. Residues 8 to 243 (IIGGRECEKN…YLDWINDTIT (236 aa)) enclose the Peptidase S1 domain. 5 disulfide bridges follow: Cys-14–Cys-158, Cys-33–Cys-49, Cys-135–Cys-204, Cys-169–Cys-183, and Cys-194–Cys-219. His-48 functions as the Charge relay system in the catalytic mechanism. Asn-85 carries an N-linked (GlcNAc...) asparagine glycan. The tract at residues 85-104 (NLSLLKXHTKADGKDYSHDL) is kallikrein (autolysis) loop. The Charge relay system role is filled by Asp-103. The active-site Charge relay system is the Ser-198. N-linked (GlcNAc...) asparagine glycosylation occurs at Asn-239.

This sequence belongs to the peptidase S1 family. Kallikrein subfamily. In terms of assembly, monomer.

It carries out the reaction Preferential cleavage of Arg-|-Xaa bonds in small molecule substrates. Highly selective action to release kallidin (lysyl-bradykinin) from kininogen involves hydrolysis of Met-|-Xaa or Leu-|-Xaa.. In terms of biological role, glandular kallikreins cleave Met-Lys and Arg-Ser bonds in kininogen to release Lys-bradykinin. This chain is Glandular kallikrein, found in Sus scrofa (Pig).